Reading from the N-terminus, the 326-residue chain is tRNA-modifying protein YgfZ (326 aa).

Trp27 and Trp189 together coordinate folate.

It belongs to the tRNA-modifying YgfZ family.

Its subcellular location is the cytoplasm. Functionally, folate-binding protein involved in regulating the level of ATP-DnaA and in the modification of some tRNAs. It is probably a key factor in regulatory networks that act via tRNA modification, such as initiation of chromosomal replication. This chain is tRNA-modifying protein YgfZ, found in Escherichia coli O17:K52:H18 (strain UMN026 / ExPEC).